Consider the following 82-residue polypeptide: Omega-conotoxin-like 9 (82 aa).

Residues 1–22 (MKLTCMMIAAVLFLTTWTFVTA) form the signal peptide. Residues 23–51 (DDSRYGLKNLFPKARHEMKNPEASKLNKR) constitute a propeptide that is removed on maturation. 3 disulfides stabilise this stretch: Cys54-Cys69, Cys61-Cys73, and Cys68-Cys77.

Belongs to the conotoxin O1 superfamily. As to expression, expressed by the venom duct.

It is found in the secreted. Its function is as follows. Omega-conotoxins act at presynaptic membranes, they bind and block voltage-gated calcium channels (Cav). The chain is Omega-conotoxin-like 9 from Conus striatus (Striated cone).